A 503-amino-acid chain; its full sequence is 12-dehydrotetracycline 5-monooxygenase/anhydrotetracycline 6-monooxygenase (503 aa).

Residues T13, 32–33 (ER), L44, Q99, V123, T160, D288, and 301–302 (LN) contribute to the FAD site.

It belongs to the PheA/TfdB FAD monooxygenase family. In terms of assembly, monomer. FAD is required as a cofactor.

It carries out the reaction 5a,11a-dehydrotetracycline + NADPH + O2 + H(+) = 5a,11a-dehydrooxytetracycline + NADP(+) + H2O. It catalyses the reaction anhydrotetracycline + NADPH + O2 + H(+) = 5a,11a-dehydrotetracycline + NADP(+) + H2O. The protein operates within antibiotic biosynthesis; oxytetracycline biosynthesis. Involved in the biosynthesis of the antibiotics oxytetracycline and tetracycline. OxyS starts by catalyzing the stereospecific hydroxylation of anhydrotetracycline at C(6) position to yield 5a,11a-dehydrotetracycline (12-dehydrotetracycline). If the released product is captured by OxyR, it is reduced to tetracycline. However, if the released product is recaptured by OxyS, it performs an additional hydroxylation at C(5), producing 5a,11a-dehydrooxytetracycline, which, following the action of OxyR becomes oxytetracycline. This is 12-dehydrotetracycline 5-monooxygenase/anhydrotetracycline 6-monooxygenase from Streptomyces rimosus subsp. rimosus (strain ATCC 10970 / DSM 40260 / JCM 4667 / NRRL 2234).